The chain runs to 656 residues: Nuclear elongation and deformation protein 1 (656 aa).

A phosphoserine mark is found at S99 and S103. A compositionally biased stretch (polar residues) spans 99-118 (SPIVSPTTSPKQTPSINVTE). The interval 99 to 121 (SPIVSPTTSPKQTPSINVTEPQD) is disordered. A Phosphothreonine modification is found at T106. Residues S107, S159, and S286 each carry the phosphoserine modification. Disordered regions lie at residues 282–328 (VYGH…VSES) and 587–656 (SDEE…ENAV). Over residues 291–300 (PSRTPASPKS) the composition is skewed to low complexity. A phosphoserine mark is found at S318, S321, and S587. Over residues 318-328 (SEQSLSPVSES) the composition is skewed to polar residues. A compositionally biased stretch (low complexity) spans 596-609 (KSTSKSPKTPKNTK). Residues 640 to 656 (FEGEEDEEGEEDVENAV) are compositionally biased toward acidic residues.

It belongs to the lipin family. In terms of assembly, interacts with dis3, pim1 and nup189.

Its function is as follows. May have a role in the maintenance of the nuclear envelope structure and in minichromosome stability. The polypeptide is Nuclear elongation and deformation protein 1 (ned1) (Schizosaccharomyces pombe (strain 972 / ATCC 24843) (Fission yeast)).